A 100-amino-acid polypeptide reads, in one-letter code: Large ribosomal subunit protein eL21 (100 aa).

This sequence belongs to the eukaryotic ribosomal protein eL21 family.

The sequence is that of Large ribosomal subunit protein eL21 from Pyrobaculum aerophilum (strain ATCC 51768 / DSM 7523 / JCM 9630 / CIP 104966 / NBRC 100827 / IM2).